The chain runs to 344 residues: Sulfate/thiosulfate import ATP-binding protein CysA (344 aa).

Residues 3-233 enclose the ABC transporter domain; that stretch reads ILIDNVSKNF…PESAFVMSFL (231 aa). 35–42 serves as a coordination point for ATP; sequence GPSGCGKS.

Belongs to the ABC transporter superfamily. Sulfate/tungstate importer (TC 3.A.1.6) family. In terms of assembly, the complex is composed of two ATP-binding proteins (CysA), two transmembrane proteins (CysT and CysW) and a solute-binding protein (CysP).

The protein localises to the cell inner membrane. The enzyme catalyses sulfate(out) + ATP + H2O = sulfate(in) + ADP + phosphate + H(+). The catalysed reaction is thiosulfate(out) + ATP + H2O = thiosulfate(in) + ADP + phosphate + H(+). Functionally, part of the ABC transporter complex CysAWTP involved in sulfate/thiosulfate import. Responsible for energy coupling to the transport system. The chain is Sulfate/thiosulfate import ATP-binding protein CysA from Gloeobacter violaceus (strain ATCC 29082 / PCC 7421).